The primary structure comprises 498 residues: Probable cytosol aminopeptidase (498 aa).

Residues lysine 264 and aspartate 269 each coordinate Mn(2+). Lysine 276 is a catalytic residue. Residues aspartate 287, aspartate 346, and glutamate 348 each coordinate Mn(2+). Arginine 350 is a catalytic residue.

Belongs to the peptidase M17 family. Requires Mn(2+) as cofactor.

It localises to the cytoplasm. The enzyme catalyses Release of an N-terminal amino acid, Xaa-|-Yaa-, in which Xaa is preferably Leu, but may be other amino acids including Pro although not Arg or Lys, and Yaa may be Pro. Amino acid amides and methyl esters are also readily hydrolyzed, but rates on arylamides are exceedingly low.. It catalyses the reaction Release of an N-terminal amino acid, preferentially leucine, but not glutamic or aspartic acids.. In terms of biological role, presumably involved in the processing and regular turnover of intracellular proteins. Catalyzes the removal of unsubstituted N-terminal amino acids from various peptides. The protein is Probable cytosol aminopeptidase of Brucella anthropi (strain ATCC 49188 / DSM 6882 / CCUG 24695 / JCM 21032 / LMG 3331 / NBRC 15819 / NCTC 12168 / Alc 37) (Ochrobactrum anthropi).